The following is a 379-amino-acid chain: Cytochrome b (379 aa).

The next 4 membrane-spanning stretches (helical) occupy residues Phe33 to Met53, Trp77 to Val98, Trp113 to Leu133, and Phe178 to Leu198. Residues His83 and His97 each coordinate heme b. Positions 182 and 196 each coordinate heme b. Residue His201 coordinates a ubiquinone. 4 helical membrane-spanning segments follow: residues Thr226–Tyr246, Leu288–Gln308, Leu320–Gly340, and Phe347–Pro367.

It belongs to the cytochrome b family. In terms of assembly, the cytochrome bc1 complex contains 11 subunits: 3 respiratory subunits (MT-CYB, CYC1 and UQCRFS1), 2 core proteins (UQCRC1 and UQCRC2) and 6 low-molecular weight proteins (UQCRH/QCR6, UQCRB/QCR7, UQCRQ/QCR8, UQCR10/QCR9, UQCR11/QCR10 and a cleavage product of UQCRFS1). This cytochrome bc1 complex then forms a dimer. Requires heme b as cofactor.

Its subcellular location is the mitochondrion inner membrane. Its function is as follows. Component of the ubiquinol-cytochrome c reductase complex (complex III or cytochrome b-c1 complex) that is part of the mitochondrial respiratory chain. The b-c1 complex mediates electron transfer from ubiquinol to cytochrome c. Contributes to the generation of a proton gradient across the mitochondrial membrane that is then used for ATP synthesis. The polypeptide is Cytochrome b (MT-CYB) (Lepilemur septentrionalis (Northern sportive lemur)).